The primary structure comprises 437 residues: MGRRMRGAAATAGLWLLALGSLLALWGGLLPPRTELPASRPPEDRLPRRPARSGGPAPAPRFPLPPPLAWDARGGSLKTFRALLTLAAGADGPPRQSRSEPRWHVSARQPRPEESAAVHGGVFWSRGLEEQVPPGFSEAQAAAWLEAARGARMVALERGGCGRSSNRLARFADGTRACVRYGINPEQIQGEALSYYLARLLGLQRHVPPLALARVEARGAQWAQVQEELRAAHWTEGSVVSLTRWLPNLTDVVVPAPWRSEDGRLRPLRDAGGELANLSQAELVDLVQWTDLILFDYLTANFDRLVSNLFSLQWDPRVMQRATSNLHRGPGGALVFLDNEAGLVHGYRVAGMWDKYNEPLLQSVCVFRERTARRVLELHRGQDAAARLLRLYRRHEPRFPELAALADPHAQLLQRRLDFLAKHILHCKAKYGRRSGT.

Residues Met1–Ala24 form the signal peptide. Disordered stretches follow at residues Arg33–Pro66 and Ala88–Ala116. Positions Ala57–Pro66 are enriched in pro residues. The N-linked (GlcNAc...) asparagine glycan is linked to Asn248.

The protein belongs to the FJX1/FJ family. Glycosylated. Post-translationally, undergoes proteolytic cleavage.

It localises to the secreted. Its function is as follows. Acts as an inhibitor of dendrite extension and branching. This Homo sapiens (Human) protein is Four-jointed box protein 1 (FJX1).